The chain runs to 213 residues: StAR-related lipid transfer protein 5 (213 aa).

The START domain occupies 1 to 213 (MDPALAAQMS…LQKAVKQFHE (213 aa)).

Functionally, may be involved in the intracellular transport of sterols or other lipids. May bind cholesterol or other sterols. The polypeptide is StAR-related lipid transfer protein 5 (STARD5) (Homo sapiens (Human)).